A 389-amino-acid chain; its full sequence is NAD-dependent protein deacetylase sirtuin-2 (389 aa).

The segment at 1–34 (MAEPDPSHPLETQAGKVQEAQDSDSDSEGGAAGG) is disordered. An N-acetylalanine modification is found at A2. Phosphoserine occurs at positions 23, 25, 27, and 53. The Deacetylase sirtuin-type domain occupies 57 to 338 (RLLDELTLEG…LALAELLGWK (282 aa)). Residues 85–89 (AGIST) and 95–97 (DFR) each bind NAD(+). Residue S100 is modified to Phosphoserine. 167–170 (QNID) contacts NAD(+). The Proton acceptor role is filled by H187. Zn(2+)-binding residues include C195 and C200. S207 is modified (phosphoserine). Residues C221 and C224 each coordinate Zn(2+). NAD(+)-binding positions include 262 to 263 (TS), 286 to 288 (NKE), and C324. Residues 350–389 (ASIDAQSGAEAPNPSTSASPRKSPPPAQDEARTTEREKPQ) are disordered. Phosphoserine is present on residues S368 and S372. Basic and acidic residues predominate over residues 378-389 (DEARTTEREKPQ).

This sequence belongs to the sirtuin family. Class I subfamily. Interacts with CDC20, FOXO3 and FZR1. Associates with microtubules in primary cortical mature neurons. Homotrimer. Interacts (via both phosphorylated, unphosphorylated, active or inactive forms) with HDAC6; the interaction is necessary for the complex to interact with alpha-tubulin, suggesting that these proteins belong to a large complex that deacetylates the cytoskeleton. Interacts with FOXO1; the interaction is disrupted upon serum-starvation or oxidative stress, leading to increased level of acetylated FOXO1 and induction of autophagy. Interacts with RELA; the interaction occurs in the cytoplasm and is increased in a TNF-alpha-dependent manner. Interacts with HOXA10; the interaction is direct. Interacts with YWHAB and YWHAG; the interactions occur in a AKT-dependent manner and increase SIRT2-dependent TP53 deacetylation. Interacts with MAPK1/ERK2 and MAPK3/ERK1; the interactions increase SIRT2 stability and deacetylation activity. Interacts (phosphorylated form) with KMT5A isoform 2; the interaction is direct, stimulates KMT5A-mediated methyltransferase activity on histone at 'Lys-20' (H4K20me1) and is increased in a H(2)O(2)-induced oxidative stress-dependent manner. Interacts with G6PD; the interaction is enhanced by H(2)O(2) treatment. Interacts with a G1/S-specific cyclin E-CDK2 complex. Interacts with AURKA, CDK5R1 (p35 form) and CDK5 and HIF1A. Interacts with the tRNA ligase SARS1; recruited to the VEGFA promoter via interaction with SARS1. Interacts with BEX4; negatively regulates alpha-tubulin deacetylation by SIRT2. Zn(2+) is required as a cofactor. Post-translationally, phosphorylated at phosphoserine and phosphothreonine. Phosphorylated at Ser-368 by a mitotic kinase CDK1/cyclin B at the G2/M transition; phosphorylation regulates the delay in cell-cycle progression. Phosphorylated at Ser-368 by a mitotic kinase G1/S-specific cyclin E/Cdk2 complex; phosphorylation inactivates SIRT2-mediated alpha-tubulin deacetylation and thereby negatively regulates cell adhesion, cell migration and neurite outgrowth during neuronal differentiation. Phosphorylated by cyclin A/Cdk2 and p35-Cdk5 complexes and to a lesser extent by the cyclin D3/Cdk4 and cyclin B/Cdk1, in vitro. Dephosphorylated at Ser-368 by CDC14A and CDC14B around early anaphase. Acetylated by EP300; acetylation leads both to the decreased of SIRT2-mediated alpha-tubulin deacetylase activity and SIRT2-mediated down-regulation of TP53 transcriptional activity. In terms of processing, ubiquitinated.

Its subcellular location is the nucleus. It is found in the cytoplasm. It localises to the perinuclear region. The protein resides in the cytoskeleton. The protein localises to the microtubule organizing center. Its subcellular location is the centrosome. It is found in the centriole. It localises to the spindle. The protein resides in the midbody. The protein localises to the chromosome. Its subcellular location is the perikaryon. It is found in the cell projection. It localises to the growth cone. The protein resides in the myelin membrane. The enzyme catalyses N(6)-acetyl-L-lysyl-[protein] + NAD(+) + H2O = 2''-O-acetyl-ADP-D-ribose + nicotinamide + L-lysyl-[protein]. The catalysed reaction is N(6)-tetradecanoyl-L-lysyl-[protein] + NAD(+) + H2O = 2''-O-tetradecanoyl-ADP-D-ribose + nicotinamide + L-lysyl-[protein]. It carries out the reaction N(6)-hexadecanoyl-L-lysyl-[protein] + NAD(+) + H2O = 2''-O-hexadecanoyl-ADP-D-ribose + nicotinamide + L-lysyl-[protein]. With respect to regulation, inhibited by Sirtinol, A3 and M15 small molecules. Inhibited by nicotinamide. In terms of biological role, NAD-dependent protein deacetylase, which deacetylates internal lysines on histone and alpha-tubulin as well as many other proteins such as key transcription factors. Participates in the modulation of multiple and diverse biological processes such as cell cycle control, genomic integrity, microtubule dynamics, cell differentiation, metabolic networks, and autophagy. Plays a major role in the control of cell cycle progression and genomic stability. Functions in the antephase checkpoint preventing precocious mitotic entry in response to microtubule stress agents, and hence allowing proper inheritance of chromosomes. Positively regulates the anaphase promoting complex/cyclosome (APC/C) ubiquitin ligase complex activity by deacetylating CDC20 and FZR1, then allowing progression through mitosis. Associates both with chromatin at transcriptional start sites (TSSs) and enhancers of active genes. Plays a role in cell cycle and chromatin compaction through epigenetic modulation of the regulation of histone H4 'Lys-20' methylation (H4K20me1) during early mitosis. Specifically deacetylates histone H4 at 'Lys-16' (H4K16ac) between the G2/M transition and metaphase enabling H4K20me1 deposition by KMT5A leading to ulterior levels of H4K20me2 and H4K20me3 deposition throughout cell cycle, and mitotic S-phase progression. Deacetylates KMT5A modulating KMT5A chromatin localization during the mitotic stress response. Also deacetylates histone H3 at 'Lys-57' (H3K56ac) during the mitotic G2/M transition. During oocyte meiosis progression, may deacetylate histone H4 at 'Lys-16' (H4K16ac) and alpha-tubulin, regulating spindle assembly and chromosome alignment by influencing microtubule dynamics and kinetochore function. Deacetylates histone H4 at 'Lys-16' (H4K16ac) at the VEGFA promoter and thereby contributes to regulate expression of VEGFA, a key regulator of angiogenesis. Deacetylates alpha-tubulin at 'Lys-40' and hence controls neuronal motility, oligodendroglial cell arbor projection processes and proliferation of non-neuronal cells. Phosphorylation at Ser-368 by a G1/S-specific cyclin E-CDK2 complex inactivates SIRT2-mediated alpha-tubulin deacetylation, negatively regulating cell adhesion, cell migration and neurite outgrowth during neuronal differentiation. Deacetylates PARD3 and participates in the regulation of Schwann cell peripheral myelination formation during early postnatal development and during postinjury remyelination. Involved in several cellular metabolic pathways. Plays a role in the regulation of blood glucose homeostasis by deacetylating and stabilizing phosphoenolpyruvate carboxykinase PCK1 activity in response to low nutrient availability. Acts as a key regulator in the pentose phosphate pathway (PPP) by deacetylating and activating the glucose-6-phosphate G6PD enzyme, and therefore, stimulates the production of cytosolic NADPH to counteract oxidative damage. Maintains energy homeostasis in response to nutrient deprivation as well as energy expenditure by inhibiting adipogenesis and promoting lipolysis. Attenuates adipocyte differentiation by deacetylating and promoting FOXO1 interaction to PPARG and subsequent repression of PPARG-dependent transcriptional activity. Plays a role in the regulation of lysosome-mediated degradation of protein aggregates by autophagy in neuronal cells. Deacetylates FOXO1 in response to oxidative stress or serum deprivation, thereby negatively regulating FOXO1-mediated autophagy. Deacetylates a broad range of transcription factors and co-regulators regulating target gene expression. Deacetylates transcriptional factor FOXO3 stimulating the ubiquitin ligase SCF(SKP2)-mediated FOXO3 ubiquitination and degradation. Deacetylates HIF1A and therefore promotes HIF1A degradation and inhibition of HIF1A transcriptional activity in tumor cells in response to hypoxia. Deacetylates RELA in the cytoplasm inhibiting NF-kappaB-dependent transcription activation upon TNF-alpha stimulation. Inhibits transcriptional activation by deacetylating p53/TP53 and EP300. Also deacetylates EIF5A. Functions as a negative regulator on oxidative stress-tolerance in response to anoxia-reoxygenation conditions. Plays a role as tumor suppressor. In addition to protein deacetylase activity, also has activity toward long-chain fatty acyl groups and mediates protein-lysine demyristoylation and depalmitoylation of target proteins, such as ARF6 and KRAS, thereby regulating their association with membranes. This is NAD-dependent protein deacetylase sirtuin-2 (SIRT2) from Macaca fascicularis (Crab-eating macaque).